Consider the following 152-residue polypeptide: Endoribonuclease YbeY (152 aa).

H112, H116, and H122 together coordinate Zn(2+).

This sequence belongs to the endoribonuclease YbeY family. Zn(2+) serves as cofactor.

It is found in the cytoplasm. Functionally, single strand-specific metallo-endoribonuclease involved in late-stage 70S ribosome quality control and in maturation of the 3' terminus of the 16S rRNA. The polypeptide is Endoribonuclease YbeY (Pseudoalteromonas translucida (strain TAC 125)).